The sequence spans 282 residues: PILR alpha-associated neural protein (282 aa).

The first 31 residues, 1 to 31 (MESRMWPALLLSHLLPLWPLLLLPLPPPAQG), serve as a signal peptide directing secretion. Residues 28–99 (PAQGSSSSPR…PSGFEEGPPS (72 aa)) are disordered. The Extracellular segment spans residues 32–178 (SSSSPRTPPA…FGGRGEGVDP (147 aa)). Residues 46–56 (PCARGGPSAPR) are compositionally biased toward low complexity. The O-linked (GalNAc...) threonine glycan is linked to Thr140. A helical transmembrane segment spans residues 179-199 (QLYVTITISIIIVLVATGIIF). Over 200–282 (KFCWDRSQKR…QLNRIPLVNL (83 aa)) the chain is Cytoplasmic. Residues 209–282 (RRRPSGQQGA…QLNRIPLVNL (74 aa)) are disordered. A compositionally biased stretch (polar residues) spans 213 to 229 (SGQQGALRQEESQQPLT).

O-glycosylation at Thr-140 is essential for recognition by PILRA. As to expression, mainly expressed in adult brain and cerebellum. Weaker expression in fetal brain and virtually no expression in spleen, heart, kidney, liver and dorsal ganglion relative to brain.

The protein localises to the membrane. In terms of biological role, acts as a ligand for PILRA in neural tissues, where it may be involved in immune regulation. This chain is PILR alpha-associated neural protein (PIANP), found in Homo sapiens (Human).